A 325-amino-acid chain; its full sequence is mRNA decay factor CTH1 (325 aa).

2 consecutive C3H1-type zinc fingers follow at residues 204-232 (LYKT…HGLN) and 242-270 (NYRT…HGDD). The disordered stretch occupies residues 284–306 (SKDTALTPLPTSLAPSNNDNITN). Polar residues predominate over residues 292-306 (LPTSLAPSNNDNITN).

In terms of biological role, binds to specific AU-rich elements (ARE) in the 3'-untranslated region of target mRNAs and promotes their degradation. In response to iron deficiency, promotes the decay of many mRNAs encoding proteins involved in iron-dependent pathways. Negatively regulates primarily iron-dependent mitochondrial processes including respiration and amino acid biosynthesis. The protein is mRNA decay factor CTH1 (CTH1) of Saccharomyces cerevisiae (strain ATCC 204508 / S288c) (Baker's yeast).